The sequence spans 461 residues: Argininosuccinate lyase (461 aa).

Belongs to the lyase 1 family. Argininosuccinate lyase subfamily.

It is found in the cytoplasm. It carries out the reaction 2-(N(omega)-L-arginino)succinate = fumarate + L-arginine. It functions in the pathway amino-acid biosynthesis; L-arginine biosynthesis; L-arginine from L-ornithine and carbamoyl phosphate: step 3/3. This Chlorobium luteolum (strain DSM 273 / BCRC 81028 / 2530) (Pelodictyon luteolum) protein is Argininosuccinate lyase.